The sequence spans 156 residues: Small ribosomal subunit protein uS7 (156 aa).

The protein belongs to the universal ribosomal protein uS7 family. As to quaternary structure, part of the 30S ribosomal subunit. Contacts proteins S9 and S11.

Its function is as follows. One of the primary rRNA binding proteins, it binds directly to 16S rRNA where it nucleates assembly of the head domain of the 30S subunit. Is located at the subunit interface close to the decoding center, probably blocks exit of the E-site tRNA. The protein is Small ribosomal subunit protein uS7 of Bacillus cereus (strain ZK / E33L).